A 387-amino-acid polypeptide reads, in one-letter code: UDP-N-acetylglucosamine--N-acetylmuramyl-(pentapeptide) pyrophosphoryl-undecaprenol N-acetylglucosamine transferase (387 aa).

Positions 1 to 22 are disordered; sequence MSEHVRSAGPPQASTAPSGGSA. UDP-N-acetyl-alpha-D-glucosamine contacts are provided by residues 41–43, Asn-158, Arg-194, Ser-222, Ile-276, and Gln-321; that span reads TGG.

It belongs to the glycosyltransferase 28 family. MurG subfamily.

It is found in the cell inner membrane. It carries out the reaction di-trans,octa-cis-undecaprenyl diphospho-N-acetyl-alpha-D-muramoyl-L-alanyl-D-glutamyl-meso-2,6-diaminopimeloyl-D-alanyl-D-alanine + UDP-N-acetyl-alpha-D-glucosamine = di-trans,octa-cis-undecaprenyl diphospho-[N-acetyl-alpha-D-glucosaminyl-(1-&gt;4)]-N-acetyl-alpha-D-muramoyl-L-alanyl-D-glutamyl-meso-2,6-diaminopimeloyl-D-alanyl-D-alanine + UDP + H(+). It functions in the pathway cell wall biogenesis; peptidoglycan biosynthesis. Its function is as follows. Cell wall formation. Catalyzes the transfer of a GlcNAc subunit on undecaprenyl-pyrophosphoryl-MurNAc-pentapeptide (lipid intermediate I) to form undecaprenyl-pyrophosphoryl-MurNAc-(pentapeptide)GlcNAc (lipid intermediate II). This chain is UDP-N-acetylglucosamine--N-acetylmuramyl-(pentapeptide) pyrophosphoryl-undecaprenol N-acetylglucosamine transferase, found in Polaromonas sp. (strain JS666 / ATCC BAA-500).